The chain runs to 107 residues: UPF0045 protein in glkA 3'region (107 aa).

This sequence belongs to the UPF0045 family.

The polypeptide is UPF0045 protein in glkA 3'region (dglA) (Staphylococcus xylosus).